Here is a 226-residue protein sequence, read N- to C-terminus: Transcriptional regulatory protein PcoR (226 aa).

The Response regulatory domain occupies 3 to 117 (RILIVEDEQK…ELVARVRTLL (115 aa)). Asp-52 is modified (4-aspartylphosphate). Residues 125–223 (ATVCTIADMT…VRGAGYVLEI (99 aa)) constitute a DNA-binding region (ompR/PhoB-type).

Phosphorylated by PcoS.

It localises to the cytoplasm. Its function is as follows. Probable member of a two-component regulatory system PcoS/PcoR. May be involved in the activation of copper resistance gene operon pcoABCD by binding to a specific site on the cop operon promoter (copper box). The protein is Transcriptional regulatory protein PcoR (pcoR) of Escherichia coli.